Reading from the N-terminus, the 217-residue chain is Large ribosomal subunit protein uL1 (217 aa).

N-acetylserine is present on Ser-2. Tyr-11 carries the phosphotyrosine modification. Lys-91 and Lys-106 each carry N6-acetyllysine. Position 118 is an N6-acetyllysine; alternate (Lys-118). Lys-118 participates in a covalent cross-link: Glycyl lysine isopeptide (Lys-Gly) (interchain with G-Cter in SUMO1); alternate. A Glycyl lysine isopeptide (Lys-Gly) (interchain with G-Cter in SUMO2); alternate cross-link involves residue Lys-118. Residue Lys-161 forms a Glycyl lysine isopeptide (Lys-Gly) (interchain with G-Cter in SUMO2) linkage.

The protein belongs to the universal ribosomal protein uL1 family. As to quaternary structure, component of the large ribosomal subunit.

Its subcellular location is the cytoplasm. Its function is as follows. Component of the large ribosomal subunit. The ribosome is a large ribonucleoprotein complex responsible for the synthesis of proteins in the cell. The protein is Large ribosomal subunit protein uL1 (Rpl10a) of Mus musculus (Mouse).